Here is a 196-residue protein sequence, read N- to C-terminus: Small ribosomal subunit protein uS4c (196 aa).

Residues 15-41 form a disordered region; it reads LGALPGLTSKRPRSGSDLKNPLRSGKR. The 62-residue stretch at 89–150 folds into the S4 RNA-binding domain; the sequence is MRLDNILFRL…KQRSKALIQN (62 aa).

It belongs to the universal ribosomal protein uS4 family. As to quaternary structure, part of the 30S ribosomal subunit. Contacts protein S5. The interaction surface between S4 and S5 is involved in control of translational fidelity.

The protein resides in the plastid. Its subcellular location is the chloroplast. One of the primary rRNA binding proteins, it binds directly to 16S rRNA where it nucleates assembly of the body of the 30S subunit. Its function is as follows. With S5 and S12 plays an important role in translational accuracy. The polypeptide is Small ribosomal subunit protein uS4c (rps4) (Narcissus odorus (Campernelle jonquil)).